A 173-amino-acid chain; its full sequence is NADH-ubiquinone oxidoreductase chain 6 (173 aa).

The next 5 membrane-spanning stretches (helical) occupy residues 1–21 (MTYL…AVAS), 24–44 (APYF…GVLV), 53–73 (LVLF…SAAL), 87–107 (VLGY…LFWG), and 141–161 (GGML…VLEL).

It belongs to the complex I subunit 6 family.

It localises to the mitochondrion membrane. The catalysed reaction is a ubiquinone + NADH + 5 H(+)(in) = a ubiquinol + NAD(+) + 4 H(+)(out). In terms of biological role, core subunit of the mitochondrial membrane respiratory chain NADH dehydrogenase (Complex I) that is believed to belong to the minimal assembly required for catalysis. Complex I functions in the transfer of electrons from NADH to the respiratory chain. The immediate electron acceptor for the enzyme is believed to be ubiquinone. The protein is NADH-ubiquinone oxidoreductase chain 6 (MT-ND6) of Oncorhynchus mykiss (Rainbow trout).